Consider the following 155-residue polypeptide: Small ribosomal subunit protein uS7 (155 aa).

Belongs to the universal ribosomal protein uS7 family. Part of the 30S ribosomal subunit. Contacts proteins S9 and S11.

In terms of biological role, one of the primary rRNA binding proteins, it binds directly to 16S rRNA where it nucleates assembly of the head domain of the 30S subunit. Is located at the subunit interface close to the decoding center, probably blocks exit of the E-site tRNA. This Chlorobium chlorochromatii (strain CaD3) protein is Small ribosomal subunit protein uS7.